A 560-amino-acid chain; its full sequence is Membrane protein insertase YidC (560 aa).

A run of 6 helical transmembrane segments spans residues 5-25 (IINLIAAIILSLSIIFGWQYF), 334-354 (AIDFGWFYIITKPVFYAMNFF), 357-377 (YVGNFGVSILIVTVIIKLLMF), 431-451 (LPILVQIPVFFSIYKVLYVTI), 476-496 (LFGLLPFAPPSFLMIGAWPIL), and 522-542 (FMPLIFLFMFSSFPVGLLIYW).

The protein belongs to the OXA1/ALB3/YidC family. Type 1 subfamily. As to quaternary structure, interacts with the Sec translocase complex via SecD. Specifically interacts with transmembrane segments of nascent integral membrane proteins during membrane integration.

It localises to the cell inner membrane. Required for the insertion and/or proper folding and/or complex formation of integral membrane proteins into the membrane. Involved in integration of membrane proteins that insert both dependently and independently of the Sec translocase complex, as well as at least some lipoproteins. Aids folding of multispanning membrane proteins. The chain is Membrane protein insertase YidC from Rickettsia rickettsii (strain Iowa).